The following is a 164-amino-acid chain: uncharacterized protein (164 aa).

This is an uncharacterized protein from Acanthamoeba polyphaga mimivirus (APMV).